Reading from the N-terminus, the 200-residue chain is Adenylate kinase (200 aa).

Residue 10 to 15 coordinates ATP; sequence GAGKGT. The NMP stretch occupies residues 30–59; sequence STGDMLRAAVAAGTPVGLEAKSIMESGGLV. Residues Thr-31, Arg-36, 57 to 59, 85 to 88, and Gln-92 each bind AMP; these read GLV and GFPR. The segment at 126–142 is LID; it reads KRAEETAARGQPVRKDD. ATP is bound at residue Arg-127. AMP contacts are provided by Arg-139 and Arg-150. Lys-178 provides a ligand contact to ATP.

This sequence belongs to the adenylate kinase family. In terms of assembly, monomer.

Its subcellular location is the cytoplasm. It catalyses the reaction AMP + ATP = 2 ADP. Its pathway is purine metabolism; AMP biosynthesis via salvage pathway; AMP from ADP: step 1/1. Catalyzes the reversible transfer of the terminal phosphate group between ATP and AMP. Plays an important role in cellular energy homeostasis and in adenine nucleotide metabolism. This chain is Adenylate kinase, found in Methylorubrum populi (strain ATCC BAA-705 / NCIMB 13946 / BJ001) (Methylobacterium populi).